A 313-amino-acid chain; its full sequence is Small ribosomal subunit protein uS2 (313 aa).

Positions 281 to 301 (AAPAAPAVEPAPEAAQEATAE) are disordered.

It belongs to the universal ribosomal protein uS2 family.

This is Small ribosomal subunit protein uS2 from Caulobacter sp. (strain K31).